The chain runs to 701 residues: Epithelial splicing regulatory protein 2 (701 aa).

RRM domains follow at residues 226–303, 327–407, and 448–523; these read TVIR…KATG, VIIR…RSTA, and CVRL…VEVF.

This sequence belongs to the ESRP family.

It is found in the nucleus. Its function is as follows. mRNA splicing factor that regulates the formation of epithelial cell-specific isoforms. Specifically regulates the expression of FGFR2-IIIb, an epithelial cell-specific isoform of FGFR2. Acts by directly binding specific sequences in mRNAs. Binds the GU-rich sequence motifs in the ISE/ISS-3, a cis-element regulatory region present in the mRNA of FGFR2. The sequence is that of Epithelial splicing regulatory protein 2 (ESRP2) from Gallus gallus (Chicken).